A 907-amino-acid polypeptide reads, in one-letter code: CRM-domain containing factor CFM3B, chloroplastic (907 aa).

The N-terminal 59 residues, 1–59 (MAINSSHHFCPMTTTTTTSAKFVDSLGSSFCKFHGTSSSISLRSYRFGFSFMKNVKRLS), are a transit peptide targeting the chloroplast. Disordered stretches follow at residues 62 to 89 (GSSS…SKVV) and 101 to 123 (LGVI…GSSS). Positions 70 to 84 (RNENWNRTQKQNQFR) are enriched in polar residues. CRM domains follow at residues 220-316 (MTLS…DGSG) and 421-518 (STLG…EVGE). Positions 621 to 654 (SAKLVRKLERKLAFAEKKLLKAERALAKVEESLK) form a coiled coil. Residues 663–763 (EGITEEERFM…KDYKRPTTLR (101 aa)) form the CRM 3 domain. A disordered region spans residues 824 to 907 (MAYSSDEETE…LQNEELDVQP (84 aa)). 2 stretches are compositionally biased toward acidic residues: residues 828–857 (SDEE…DEEG) and 868–881 (TDVE…DTDF). Positions 882–897 (GDNSASSTTPETTFVE) are enriched in polar residues.

Interacts with RNA. Part of large ribonucleo-protein particles that contain CAF1 and/or CAF2, and RNC1. Interacts with RFC3 in plastids. In terms of tissue distribution, expressed at low levels in roots and shoots.

It is found in the plastid. The protein localises to the chloroplast. Binds specific group II introns in chloroplasts and facilitates their splicing. Exhibits non-specific action during plastid rRNA biogenesis; RFC3 prevents unaccurate splicing to improve the accuracy of plastid rRNA processing. Acts on subgroup IIB introns. The substrates of the subgroup IIB also require the CRM domain proteins CAF1 or CAF2, with a simultaneous binding of CFM3B and CAF1 or CAF2. Required for seed development. The sequence is that of CRM-domain containing factor CFM3B, chloroplastic from Arabidopsis thaliana (Mouse-ear cress).